The primary structure comprises 212 residues: uncharacterized protein (212 aa).

Residues 5-25 (IFIILIAVLLIGVNIKKIAAA) form a helical membrane-spanning segment.

The protein resides in the membrane. This is an uncharacterized protein from Borreliella burgdorferi (strain ATCC 35210 / DSM 4680 / CIP 102532 / B31) (Borrelia burgdorferi).